Consider the following 462-residue polypeptide: ATP synthase subunit beta 2 (462 aa).

151–158 serves as a coordination point for ATP; that stretch reads GGAGVGKT.

Belongs to the ATPase alpha/beta chains family. F-type ATPases have 2 components, CF(1) - the catalytic core - and CF(0) - the membrane proton channel. CF(1) has five subunits: alpha(3), beta(3), gamma(1), delta(1), epsilon(1). CF(0) has three main subunits: a(1), b(2) and c(9-12). The alpha and beta chains form an alternating ring which encloses part of the gamma chain. CF(1) is attached to CF(0) by a central stalk formed by the gamma and epsilon chains, while a peripheral stalk is formed by the delta and b chains.

It is found in the cell inner membrane. The catalysed reaction is ATP + H2O + 4 H(+)(in) = ADP + phosphate + 5 H(+)(out). Its function is as follows. Produces ATP from ADP in the presence of a proton gradient across the membrane. The catalytic sites are hosted primarily by the beta subunits. The sequence is that of ATP synthase subunit beta 2 from Chlorobaculum tepidum (strain ATCC 49652 / DSM 12025 / NBRC 103806 / TLS) (Chlorobium tepidum).